The chain runs to 225 residues: UPF0758 protein BPP1850 (225 aa).

An MPN domain is found at 103-225 (ALANPDLVRR…TVSMAAQGHL (123 aa)). Histidine 174, histidine 176, and aspartate 187 together coordinate Zn(2+). Positions 174 to 187 (HNHPGGTAAASAAD) match the JAMM motif motif.

The protein belongs to the UPF0758 family.

This chain is UPF0758 protein BPP1850, found in Bordetella parapertussis (strain 12822 / ATCC BAA-587 / NCTC 13253).